A 292-amino-acid polypeptide reads, in one-letter code: Norajmaline N-methyltransferase (292 aa).

Residues 71 to 80 form an SAM motif I region; the sequence is KNMLDIGCGV. An SAM motif II region spans residues 134 to 142; the sequence is KDGTFDLVL. Residues 135–141 carry the Vacuolar targeting signal motif; it reads DGTFDLV. The SAM motif III stretch occupies residues 161–170; that stretch reads IRVAAPGAPI.

It belongs to the class I-like SAM-binding methyltransferase superfamily. gTMT family. Homodimer. Mainly expressed in mature roots and, to a lesser extent, in leaves, stems and flowers.

Its subcellular location is the vacuole membrane. The catalysed reaction is norajmaline + S-adenosyl-L-methionine = ajmaline + S-adenosyl-L-homocysteine + H(+). The enzyme catalyses 4-methylnorajmaline + S-adenosyl-L-methionine = 4-methylajmaline + S-adenosyl-L-homocysteine + H(+). Its pathway is alkaloid biosynthesis; ajmaline biosynthesis. In terms of biological role, N-methyltransferase involved in the biosynthesis of ajmaline-type monoterpenoid indole alkaloids (MIAs) natural products, important plant-derived pharmaceuticals used in the therapy of heart disorders. Catalyzes the indole N-methylation of norajmaline to produce ajmaline. Also able, with a lower efficiency, to mediates the conversion of 4-methylnorajmaline to 4-methylajmaline. The chain is Norajmaline N-methyltransferase from Rauvolfia serpentina (Serpentine wood).